The primary structure comprises 309 residues: tRNA dimethylallyltransferase (309 aa).

Position 13–20 (13–20) interacts with ATP; it reads GPTAVGKS. 15 to 20 serves as a coordination point for substrate; it reads TAVGKS.

The protein belongs to the IPP transferase family. In terms of assembly, monomer. Requires Mg(2+) as cofactor.

It carries out the reaction adenosine(37) in tRNA + dimethylallyl diphosphate = N(6)-dimethylallyladenosine(37) in tRNA + diphosphate. Catalyzes the transfer of a dimethylallyl group onto the adenine at position 37 in tRNAs that read codons beginning with uridine, leading to the formation of N6-(dimethylallyl)adenosine (i(6)A). The polypeptide is tRNA dimethylallyltransferase (Lacticaseibacillus casei (strain BL23) (Lactobacillus casei)).